The primary structure comprises 98 residues: MMPISLSLTMAFSLALAGTLIYRSHLMSTLLCLEGMMLSLFILMAMLISHFHMFSMSMAPLILLVFSACEAGIGLALLVKISANYGNDYVQNLNLLKC.

3 helical membrane-spanning segments follow: residues 1–21 (MMPI…GTLI), 28–48 (STLL…AMLI), and 59–79 (APLI…ALLV).

It belongs to the complex I subunit 4L family. In terms of assembly, core subunit of respiratory chain NADH dehydrogenase (Complex I) which is composed of 45 different subunits.

The protein resides in the mitochondrion inner membrane. It catalyses the reaction a ubiquinone + NADH + 5 H(+)(in) = a ubiquinol + NAD(+) + 4 H(+)(out). Its function is as follows. Core subunit of the mitochondrial membrane respiratory chain NADH dehydrogenase (Complex I) which catalyzes electron transfer from NADH through the respiratory chain, using ubiquinone as an electron acceptor. Part of the enzyme membrane arm which is embedded in the lipid bilayer and involved in proton translocation. The polypeptide is NADH-ubiquinone oxidoreductase chain 4L (MT-ND4L) (Petaurus breviceps (Australian sugar glider)).